Reading from the N-terminus, the 788-residue chain is Ciliated left-right organizer metallopeptidase (788 aa).

Residues 1–20 (MLLLLLLLLLLPPLVLRVAA) form the signal peptide. Over 21-735 (SRCLHDETQK…DHNPSMTHLR (715 aa)) the chain is Extracellular. Residues 40–56 (SQLPSKSRSSSLTLPSS) are compositionally biased toward low complexity. Residues 40–59 (SQLPSKSRSSSLTLPSSRDP) form a disordered region. Histidine 305 contributes to the Zn(2+) binding site. Residue glutamate 306 is part of the active site. Histidine 309 provides a ligand contact to Zn(2+). A glycan (N-linked (GlcNAc...) asparagine) is linked at asparagine 333. Residue histidine 385 coordinates Zn(2+). Asparagine 425, asparagine 491, asparagine 524, and asparagine 713 each carry an N-linked (GlcNAc...) asparagine glycan. Residues 736–756 (LSMGLCLMLLILVGVMGTTAY) form a helical membrane-spanning segment. Residues 757 to 788 (QKRATLPVRPSASYHSPELHSTRVPVRGIREV) are Cytoplasmic-facing. Residues 767–788 (SASYHSPELHSTRVPVRGIREV) are disordered.

It belongs to the peptidase M8 family. Zn(2+) is required as a cofactor.

The protein localises to the membrane. In terms of biological role, putative metalloproteinase that plays a role in left-right patterning process. In Homo sapiens (Human), this protein is Ciliated left-right organizer metallopeptidase.